The following is a 519-amino-acid chain: Glucoamylase GLA1 (519 aa).

An N-terminal signal peptide occupies residues 1 to 27; the sequence is MRFGVLISVFVAIVSALPLQEGPLNKR. Asn115 and Asn127 each carry an N-linked (GlcNAc...) asparagine glycan. Position 166 (Trp166) interacts with substrate. Residue Asn205 is glycosylated (N-linked (GlcNAc...) asparagine). Residue Asp234 is the Proton acceptor of the active site. Glu237 functions as the Proton donor in the catalytic mechanism.

Belongs to the glycosyl hydrolase 15 family.

It carries out the reaction Hydrolysis of terminal (1-&gt;4)-linked alpha-D-glucose residues successively from non-reducing ends of the chains with release of beta-D-glucose.. The sequence is that of Glucoamylase GLA1 (GLA1) from Saccharomycopsis fibuligera (Yeast).